A 566-amino-acid chain; its full sequence is Urease subunit alpha (566 aa).

Residues 128 to 566 enclose the Urease domain; that stretch reads GGVDTHIHFI…LPMAQRYFLF (439 aa). Ni(2+) contacts are provided by histidine 133, histidine 135, and lysine 216. Lysine 216 bears the N6-carboxylysine mark. Residue histidine 218 coordinates substrate. Residues histidine 245 and histidine 271 each coordinate Ni(2+). Histidine 319 (proton donor) is an active-site residue. Aspartate 359 serves as a coordination point for Ni(2+).

Belongs to the metallo-dependent hydrolases superfamily. Urease alpha subunit family. May form a heterohexamer of 3 UreC (alpha) and 3 UreAB (gamma/beta) subunits. May also form a heterotrimer of UreA (gamma), UreB (beta) and UreC (alpha) subunits. Three heterotrimers associate to form the active enzyme. It depends on Ni cation as a cofactor. Post-translationally, carboxylation allows a single lysine to coordinate two nickel ions.

The protein resides in the cytoplasm. It catalyses the reaction urea + 2 H2O + H(+) = hydrogencarbonate + 2 NH4(+). Its pathway is nitrogen metabolism; urea degradation; CO(2) and NH(3) from urea (urease route): step 1/1. The chain is Urease subunit alpha from Pseudomonas syringae pv. tomato (strain ATCC BAA-871 / DC3000).